A 152-amino-acid chain; its full sequence is Mitochondrial holo-[acyl-carrier-protein] synthase (152 aa).

The protein belongs to the P-Pant transferase superfamily. AcpS family.

Its subcellular location is the mitochondrion. It carries out the reaction apo-[ACP] + CoA = holo-[ACP] + adenosine 3',5'-bisphosphate + H(+). Its function is as follows. Transfers the 4'-phosphopantetheine moiety from coenzyme A to a Ser of mitochondrial acyl-carrier-protein. This is Mitochondrial holo-[acyl-carrier-protein] synthase (PPT2) from Candida glabrata (strain ATCC 2001 / BCRC 20586 / JCM 3761 / NBRC 0622 / NRRL Y-65 / CBS 138) (Yeast).